The chain runs to 152 residues: Protein-export protein SecB (152 aa).

Belongs to the SecB family. In terms of assembly, homotetramer, a dimer of dimers. One homotetramer interacts with 1 SecA dimer.

The protein resides in the cytoplasm. One of the proteins required for the normal export of preproteins out of the cell cytoplasm. It is a molecular chaperone that binds to a subset of precursor proteins, maintaining them in a translocation-competent state. It also specifically binds to its receptor SecA. This chain is Protein-export protein SecB, found in Rickettsia massiliae (strain Mtu5).